The chain runs to 107 residues: uncharacterized protein (107 aa).

Its subcellular location is the mitochondrion. This is an uncharacterized protein from Arabidopsis thaliana (Mouse-ear cress).